Reading from the N-terminus, the 288-residue chain is N(1)-aminopropylagmatine ureohydrolase (288 aa).

Mn(2+) contacts are provided by histidine 114, aspartate 133, histidine 135, aspartate 137, aspartate 213, and aspartate 215.

This sequence belongs to the arginase family. Requires Mn(2+) as cofactor.

Its subcellular location is the cytoplasm. It catalyses the reaction N(1)-(3-aminopropyl)agmatine + H2O = urea + spermidine. The catalysed reaction is agmatine + H2O = urea + putrescine. The protein operates within amine and polyamine biosynthesis; spermidine biosynthesis. Functionally, involved in the biosynthesis of polyamines which are thought to support the growth of thermophilic microorganisms under high-temperature conditions. It seems that long-chain and branched-chain of polyamines effectively stabilize DNA and RNA, respectively. Catalyzes the decarboxylation of N1-(3-aminopropyl)agmatine to yield spermidine and urea. It can also use agmatine to yield putrescine. The chain is N(1)-aminopropylagmatine ureohydrolase from Thermococcus kodakarensis (strain ATCC BAA-918 / JCM 12380 / KOD1) (Pyrococcus kodakaraensis (strain KOD1)).